The following is a 131-amino-acid chain: Small ribosomal subunit protein uS8 (131 aa).

It belongs to the universal ribosomal protein uS8 family. Part of the 30S ribosomal subunit. Contacts proteins S5 and S12.

Its function is as follows. One of the primary rRNA binding proteins, it binds directly to 16S rRNA central domain where it helps coordinate assembly of the platform of the 30S subunit. The protein is Small ribosomal subunit protein uS8 of Mycoplasmopsis agalactiae (strain NCTC 10123 / CIP 59.7 / PG2) (Mycoplasma agalactiae).